A 747-amino-acid chain; its full sequence is Endopolyphosphatase (747 aa).

A topological domain (cytoplasmic) is located at residue methionine 1. Residues 2–22 (LPKTLTIWASLASLAVAQSGQ) form a helical; Signal-anchor for type II membrane protein membrane-spanning segment. At 23-747 (VVFAKNADGK…AEYLEEPDDD (725 aa)) the chain is on the vacuolar side. 3 N-linked (GlcNAc...) asparagine glycosylation sites follow: asparagine 134, asparagine 191, and asparagine 463. The segment at 570 to 640 (AVATSSEPES…PKFPKDLQPG (71 aa)) is disordered. Acidic residues predominate over residues 577–586 (PESDDYDSDL). The span at 591–625 (KKGKKKGKKGKKGKKGKKGKKKKGKKGKKGKKGKR) shows a compositional bias: basic residues. Basic and acidic residues predominate over residues 626–635 (DKSMPPKFPK). Asparagine 659 carries an N-linked (GlcNAc...) asparagine glycan.

The protein belongs to the endopolyphosphatase PPN1 family. A divalent metal cation is required as a cofactor. Processing by proteases in the vacuole may be required for activation.

The protein localises to the vacuole membrane. It carries out the reaction [phosphate](n+1) + n H2O = (n+1) phosphate + n H(+). Functionally, catalyzes the hydrolysis of inorganic polyphosphate (polyP) chains of many hundreds of phosphate residues into shorter lengths. This chain is Endopolyphosphatase (PPN1), found in Yarrowia lipolytica (strain CLIB 122 / E 150) (Yeast).